Consider the following 323-residue polypeptide: o-succinylbenzoate synthase (323 aa).

Residue Lys134 is the Proton donor of the active site. Mg(2+)-binding residues include Asp162, Glu191, and Asp214. The Proton acceptor role is filled by Lys236.

It belongs to the mandelate racemase/muconate lactonizing enzyme family. MenC type 1 subfamily. A divalent metal cation serves as cofactor.

The enzyme catalyses (1R,6R)-6-hydroxy-2-succinyl-cyclohexa-2,4-diene-1-carboxylate = 2-succinylbenzoate + H2O. It functions in the pathway quinol/quinone metabolism; 1,4-dihydroxy-2-naphthoate biosynthesis; 1,4-dihydroxy-2-naphthoate from chorismate: step 4/7. The protein operates within quinol/quinone metabolism; menaquinone biosynthesis. Converts 2-succinyl-6-hydroxy-2,4-cyclohexadiene-1-carboxylate (SHCHC) to 2-succinylbenzoate (OSB). This Yersinia pseudotuberculosis serotype O:3 (strain YPIII) protein is o-succinylbenzoate synthase.